A 189-amino-acid chain; its full sequence is Elongation factor P (189 aa).

The protein belongs to the elongation factor P family.

It is found in the cytoplasm. Its pathway is protein biosynthesis; polypeptide chain elongation. Functionally, involved in peptide bond synthesis. Stimulates efficient translation and peptide-bond synthesis on native or reconstituted 70S ribosomes in vitro. Probably functions indirectly by altering the affinity of the ribosome for aminoacyl-tRNA, thus increasing their reactivity as acceptors for peptidyl transferase. In Campylobacter jejuni subsp. doylei (strain ATCC BAA-1458 / RM4099 / 269.97), this protein is Elongation factor P.